Consider the following 84-residue polypeptide: RNA-binding protein Hfq (84 aa).

Residues 10–69 (EPFLNTLRREHVPVSIYLVNGIKLQGQIESFDQYVVLLRNTVTQMVFKHAISTIVPGRAV) enclose the Sm domain.

Belongs to the Hfq family. In terms of assembly, homohexamer.

RNA chaperone that binds small regulatory RNA (sRNAs) and mRNAs to facilitate mRNA translational regulation in response to envelope stress, environmental stress and changes in metabolite concentrations. Also binds with high specificity to tRNAs. The polypeptide is RNA-binding protein Hfq (Verminephrobacter eiseniae (strain EF01-2)).